The primary structure comprises 416 residues: Gamma-glutamyl phosphate reductase (416 aa).

It belongs to the gamma-glutamyl phosphate reductase family.

The protein resides in the cytoplasm. It carries out the reaction L-glutamate 5-semialdehyde + phosphate + NADP(+) = L-glutamyl 5-phosphate + NADPH + H(+). The protein operates within amino-acid biosynthesis; L-proline biosynthesis; L-glutamate 5-semialdehyde from L-glutamate: step 2/2. Functionally, catalyzes the NADPH-dependent reduction of L-glutamate 5-phosphate into L-glutamate 5-semialdehyde and phosphate. The product spontaneously undergoes cyclization to form 1-pyrroline-5-carboxylate. The polypeptide is Gamma-glutamyl phosphate reductase (Glaesserella parasuis serovar 5 (strain SH0165) (Haemophilus parasuis)).